The following is a 1229-amino-acid chain: Phosphorylase b kinase regulatory subunit alpha, liver isoform (1229 aa).

Residues 625–646 show a composition bias toward acidic residues; it reads DSLLEDDEEQEEEEEDKFEDDY. The tract at residues 625–648 is disordered; sequence DSLLEDDEEQEEEEEDKFEDDYNN. The segment at 825-855 is calmodulin-binding; it reads LEELYIQAGACKEWGLIRYISGILRKRVEVL. Positions 1024 to 1050 are disordered; it reads EIKQRCSSPSTPSGILSPVGPGPADGQ. Residues 1028-1037 show a composition bias toward polar residues; it reads RCSSPSTPSG. A calmodulin-binding region spans residues 1052–1092; that stretch reads HWVERQGQWLRRRRLDGAINRVPVGFYQKVWKILQKCHGLS. Cysteine 1226 carries S-farnesyl cysteine lipidation.

Belongs to the phosphorylase b kinase regulatory chain family. As to quaternary structure, polymer of 16 chains, four each of alpha, beta, gamma, and delta. Alpha and beta are regulatory chains, gamma is the catalytic chain, and delta is calmodulin. In terms of processing, although the final Cys may be farnesylated, the terminal tripeptide is probably not removed, and the C-terminus is not methylated.

Its subcellular location is the cell membrane. It functions in the pathway glycan biosynthesis; glycogen metabolism. With respect to regulation, by phosphorylation of various serine residues and by calcium. In terms of biological role, phosphorylase b kinase catalyzes the phosphorylation of serine in certain substrates, including troponin I. The alpha chain may bind calmodulin. This chain is Phosphorylase b kinase regulatory subunit alpha, liver isoform (phka2), found in Takifugu rubripes (Japanese pufferfish).